A 418-amino-acid chain; its full sequence is UDP-N-acetylglucosamine 1-carboxyvinyltransferase (418 aa).

Residue 23 to 24 (KN) coordinates phosphoenolpyruvate. Arginine 93 lines the UDP-N-acetyl-alpha-D-glucosamine pocket. Catalysis depends on aspartate 117, which acts as the Proton donor. 2 residues coordinate UDP-N-acetyl-alpha-D-glucosamine: aspartate 305 and valine 327.

The protein belongs to the EPSP synthase family. MurA subfamily.

The protein resides in the cytoplasm. The catalysed reaction is phosphoenolpyruvate + UDP-N-acetyl-alpha-D-glucosamine = UDP-N-acetyl-3-O-(1-carboxyvinyl)-alpha-D-glucosamine + phosphate. The protein operates within cell wall biogenesis; peptidoglycan biosynthesis. Cell wall formation. Adds enolpyruvyl to UDP-N-acetylglucosamine. The chain is UDP-N-acetylglucosamine 1-carboxyvinyltransferase from Mycobacterium leprae (strain TN).